Reading from the N-terminus, the 175-residue chain is Co-chaperone protein HscB homolog (175 aa).

One can recognise a J domain in the interval 7 to 79; that stretch reads SHFDLFHLPA…LKRATYLLSL (73 aa).

This sequence belongs to the HscB family. Interacts with HscA and stimulates its ATPase activity.

Functionally, co-chaperone involved in the maturation of iron-sulfur cluster-containing proteins. Seems to help targeting proteins to be folded toward HscA. In Burkholderia multivorans (strain ATCC 17616 / 249), this protein is Co-chaperone protein HscB homolog.